Consider the following 1255-residue polypeptide: Pre-mRNA-splicing factor ATP-dependent RNA helicase DEAH7 (1255 aa).

The segment at 1-316 (MGVDPFKTTE…SDEDRSQGAE (316 aa)) is disordered. Over residues 13-60 (EADKETNGGVPVKDKLTFKAPERKSRLGLDARAIEKKDNAKTEGEFKV) the composition is skewed to basic and acidic residues. Residues 109-137 (AQESTVTTENAGTSDISITPRTLSCTSSY) show a composition bias toward polar residues. 2 consecutive short sequence motifs (nuclear localization signal) follow at residues 144-153 (RHREEHRRDR) and 172-191 (RRRESYRQSDRDYHGEKRRR). Residues 144–219 (RHREEHRRDR…EWERSPHGDR (76 aa)) are compositionally biased toward basic and acidic residues. 2 stretches are compositionally biased toward low complexity: residues 220–240 (GSSYSRRPQPSPSPMLAAASP) and 271–290 (PIRASGSSIRSSSSRYGGRS). Residues 297–316 (REGDLTNEGHSDEDRSQGAE) are compositionally biased toward basic and acidic residues. The Helicase ATP-binding domain maps to 568–731 (LQVIRENQVI…FGSVPIFNIP (164 aa)). Residue 581 to 588 (GETGSGKT) participates in ATP binding. The DEAH box motif lies at 678-681 (DEAH). In terms of domain architecture, Helicase C-terminal spans 753-933 (AVKQAMTIHI…NVVLLLKSLK (181 aa)). Over residues 1190–1224 (LEHKKKQKEEKSGMEEEMEKLRRDQVESELRSKER) the composition is skewed to basic and acidic residues. Positions 1190-1255 (LEHKKKQKEE…TFLRPKKLGL (66 aa)) are disordered.

It belongs to the DEAD box helicase family. DEAH subfamily. PRP16 sub-subfamily. As to quaternary structure, interacts with the Phytophthora PSR1 protein.

Its subcellular location is the nucleus. The catalysed reaction is ATP + H2O = ADP + phosphate + H(+). Involved in pre-mRNA splicing by mediating structural transitions of the spliceosome during the catalytic step. Facilitates expression of genes involved in auxin-mediated development including male-gametophyte transmission, apical-basal patterning of embryonic and gynoecium development, stamen development, phyllotactic flower positioning, and vascular development. Also involved in root-meristem maintenance and planar polarity of root-hair positioning. Acts as a component of RNA silencing that regulates distinct classes of endogenous small RNAs. Functions as a positive regulator of plant immunity. The chain is Pre-mRNA-splicing factor ATP-dependent RNA helicase DEAH7 from Arabidopsis thaliana (Mouse-ear cress).